The following is a 461-amino-acid chain: Bifunctional protein GlmU (461 aa).

A pyrophosphorylase region spans residues 1–229 (MNKYVVILAA…FSESLGVNDR (229 aa)). UDP-N-acetyl-alpha-D-glucosamine-binding positions include 8 to 11 (LAAG), Lys-22, Gln-72, and 77 to 78 (GT). Asp-102 contacts Mg(2+). UDP-N-acetyl-alpha-D-glucosamine-binding residues include Gly-139, Glu-154, Asn-169, and Asn-227. Mg(2+) is bound at residue Asn-227. The linker stretch occupies residues 230-250 (IALAQATKIMQRRINEEHMRN). The interval 251 to 461 (GVSFIDPDTA…LPLAKDKEWE (211 aa)) is N-acetyltransferase. Arg-332 and Lys-350 together coordinate UDP-N-acetyl-alpha-D-glucosamine. The active-site Proton acceptor is the His-362. The UDP-N-acetyl-alpha-D-glucosamine site is built by Tyr-365 and Asn-376. Acetyl-CoA contacts are provided by residues 385–386 (NY), Ala-422, and Arg-439.

It in the N-terminal section; belongs to the N-acetylglucosamine-1-phosphate uridyltransferase family. In the C-terminal section; belongs to the transferase hexapeptide repeat family. In terms of assembly, homotrimer. Requires Mg(2+) as cofactor.

The protein localises to the cytoplasm. It catalyses the reaction alpha-D-glucosamine 1-phosphate + acetyl-CoA = N-acetyl-alpha-D-glucosamine 1-phosphate + CoA + H(+). It carries out the reaction N-acetyl-alpha-D-glucosamine 1-phosphate + UTP + H(+) = UDP-N-acetyl-alpha-D-glucosamine + diphosphate. The protein operates within nucleotide-sugar biosynthesis; UDP-N-acetyl-alpha-D-glucosamine biosynthesis; N-acetyl-alpha-D-glucosamine 1-phosphate from alpha-D-glucosamine 6-phosphate (route II): step 2/2. It functions in the pathway nucleotide-sugar biosynthesis; UDP-N-acetyl-alpha-D-glucosamine biosynthesis; UDP-N-acetyl-alpha-D-glucosamine from N-acetyl-alpha-D-glucosamine 1-phosphate: step 1/1. It participates in bacterial outer membrane biogenesis; LPS lipid A biosynthesis. Its function is as follows. Catalyzes the last two sequential reactions in the de novo biosynthetic pathway for UDP-N-acetylglucosamine (UDP-GlcNAc). The C-terminal domain catalyzes the transfer of acetyl group from acetyl coenzyme A to glucosamine-1-phosphate (GlcN-1-P) to produce N-acetylglucosamine-1-phosphate (GlcNAc-1-P), which is converted into UDP-GlcNAc by the transfer of uridine 5-monophosphate (from uridine 5-triphosphate), a reaction catalyzed by the N-terminal domain. In Lactobacillus johnsonii (strain CNCM I-12250 / La1 / NCC 533), this protein is Bifunctional protein GlmU.